Reading from the N-terminus, the 444-residue chain is Homogentisate 1,2-dioxygenase (444 aa).

The active-site Proton acceptor is the H298. Residues H341 and E347 each coordinate Fe cation. Residues Y356 and H377 each coordinate homogentisate. H377 contributes to the Fe cation binding site.

Belongs to the homogentisate dioxygenase family. In terms of assembly, hexamer; dimer of trimers. Requires Fe cation as cofactor.

It carries out the reaction homogentisate + O2 = 4-maleylacetoacetate + H(+). Its pathway is amino-acid degradation; L-phenylalanine degradation; acetoacetate and fumarate from L-phenylalanine: step 4/6. In terms of biological role, involved in the catabolism of homogentisate (2,5-dihydroxyphenylacetate or 2,5-OH-PhAc), a central intermediate in the degradation of phenylalanine and tyrosine. Catalyzes the oxidative ring cleavage of the aromatic ring of homogentisate to yield maleylacetoacetate. The sequence is that of Homogentisate 1,2-dioxygenase from Burkholderia orbicola (strain MC0-3).